A 325-amino-acid polypeptide reads, in one-letter code: BES1/BZR1 homolog protein 4 (325 aa).

The interval 1-21 (MTSGTRMPTWRERENNKRRER) is disordered. Residues 6–89 (RMPTWREREN…RMEIGGGSAT (84 aa)) form a required for DNA-binding region. At T169 the chain carries Phosphothreonine. The tract at residues 304–325 (ERIHEESGSDDLELTLGNSSTR) is disordered.

This sequence belongs to the BZR/LAT61 family. In terms of processing, phosphorylated. Phosphorylation increases protein degradation.

This Arabidopsis thaliana (Mouse-ear cress) protein is BES1/BZR1 homolog protein 4 (BEH4).